The chain runs to 159 residues: Cell division protein SepF (159 aa).

Residues 23–69 (DYIEEDEEQKPASKSAFDSDHTVTPLASTTAPAASSTTKPFPGGRVN) are disordered. The span at 44-64 (TVTPLASTTAPAASSTTKPFP) shows a compositional bias: low complexity.

This sequence belongs to the SepF family. Homodimer. Interacts with FtsZ.

The protein localises to the cytoplasm. In terms of biological role, cell division protein that is part of the divisome complex and is recruited early to the Z-ring. Probably stimulates Z-ring formation, perhaps through the cross-linking of FtsZ protofilaments. Its function overlaps with FtsA. In Bifidobacterium longum (strain DJO10A), this protein is Cell division protein SepF.